The following is a 628-amino-acid chain: Chaperone protein HtpG (628 aa).

The a; substrate-binding stretch occupies residues 1-333 (MTTDTKATET…SADLPLNVSR (333 aa)). The tract at residues 334–549 (EMIQESPLLA…EHGPDRQFER (216 aa)) is b. The segment at 550-628 (LMNAAGRLDK…RLIARGIAKG (79 aa)) is c.

It belongs to the heat shock protein 90 family. Homodimer.

It is found in the cytoplasm. Functionally, molecular chaperone. Has ATPase activity. This chain is Chaperone protein HtpG, found in Mesorhizobium japonicum (strain LMG 29417 / CECT 9101 / MAFF 303099) (Mesorhizobium loti (strain MAFF 303099)).